Here is a 359-residue protein sequence, read N- to C-terminus: Phospho-N-acetylmuramoyl-pentapeptide-transferase (359 aa).

10 helical membrane-spanning segments follow: residues 3-23, 55-75, 80-100, 117-137, 156-176, 187-207, 231-251, 255-275, 280-300, and 334-354; these read LILI…PALI, VAIL…GMAM, PSAS…VGFI, TAKT…ALQF, IATV…VVSA, LDGL…LITF, LALV…WNAA, IFMG…ISVT, ILAV…VVQI, and FWLL…GEWL.

Belongs to the glycosyltransferase 4 family. MraY subfamily. Requires Mg(2+) as cofactor.

The protein localises to the cell membrane. It carries out the reaction UDP-N-acetyl-alpha-D-muramoyl-L-alanyl-gamma-D-glutamyl-meso-2,6-diaminopimeloyl-D-alanyl-D-alanine + di-trans,octa-cis-undecaprenyl phosphate = di-trans,octa-cis-undecaprenyl diphospho-N-acetyl-alpha-D-muramoyl-L-alanyl-D-glutamyl-meso-2,6-diaminopimeloyl-D-alanyl-D-alanine + UMP. The protein operates within cell wall biogenesis; peptidoglycan biosynthesis. Catalyzes the initial step of the lipid cycle reactions in the biosynthesis of the cell wall peptidoglycan: transfers peptidoglycan precursor phospho-MurNAc-pentapeptide from UDP-MurNAc-pentapeptide onto the lipid carrier undecaprenyl phosphate, yielding undecaprenyl-pyrophosphoryl-MurNAc-pentapeptide, known as lipid I. This chain is Phospho-N-acetylmuramoyl-pentapeptide-transferase, found in Mycolicibacterium smegmatis (strain ATCC 700084 / mc(2)155) (Mycobacterium smegmatis).